A 1083-amino-acid chain; its full sequence is uncharacterized protein (1083 aa).

The disordered stretch occupies residues 93 to 145 (SKGNLRYVPTTSRNPSNTDTYSSSIDISSSSSSINTSDDSSGKTSSNDLSDMS). Positions 108-145 (SNTDTYSSSIDISSSSSSINTSDDSSGKTSSNDLSDMS) are enriched in low complexity.

The protein resides in the virion. This is an uncharacterized protein from Acanthamoeba polyphaga (Amoeba).